Consider the following 607-residue polypeptide: Sulfite reductase [NADPH] flavoprotein alpha-component (607 aa).

Residues 66–204 (VTILYGSQTG…AAGQWHADVL (139 aa)) enclose the Flavodoxin-like domain. FMN-binding positions include 72–77 (SQTGNG), 119–122 (STHG), and 155–164 (LGDSSYEFFC). In terms of domain architecture, FAD-binding FR-type spans 239 to 456 (QNPYRAEVLV…VEPNKHFRLP (218 aa)). Residues T327, L361, 395 to 398 (RLYS), 413 to 415 (TVA), and 428 to 431 (GGAS) each bind FAD. NADP(+) contacts are provided by residues 527–528 (SR), 533–537 (KIYVQ), and D569. Y607 contacts FAD.

The protein belongs to the NADPH-dependent sulphite reductase flavoprotein subunit CysJ family. This sequence in the N-terminal section; belongs to the flavodoxin family. It in the C-terminal section; belongs to the flavoprotein pyridine nucleotide cytochrome reductase family. As to quaternary structure, alpha(8)-beta(8). The alpha component is a flavoprotein, the beta component is a hemoprotein. FAD is required as a cofactor. FMN serves as cofactor.

It catalyses the reaction hydrogen sulfide + 3 NADP(+) + 3 H2O = sulfite + 3 NADPH + 4 H(+). It participates in sulfur metabolism; hydrogen sulfide biosynthesis; hydrogen sulfide from sulfite (NADPH route): step 1/1. Functionally, component of the sulfite reductase complex that catalyzes the 6-electron reduction of sulfite to sulfide. This is one of several activities required for the biosynthesis of L-cysteine from sulfate. The flavoprotein component catalyzes the electron flow from NADPH -&gt; FAD -&gt; FMN to the hemoprotein component. The chain is Sulfite reductase [NADPH] flavoprotein alpha-component from Shewanella oneidensis (strain ATCC 700550 / JCM 31522 / CIP 106686 / LMG 19005 / NCIMB 14063 / MR-1).